A 170-amino-acid chain; its full sequence is Transcription factor E (170 aa).

In terms of domain architecture, HTH TFE/IIEalpha-type spans 1-93; it reads MKDVYLYIVE…TWYVDDEIIK (93 aa).

It belongs to the TFE family. Monomer. Interaction with RNA polymerase subunits RpoF and RpoE is necessary for Tfe stimulatory transcription activity. Able to interact with Tbp and RNA polymerase in the absence of DNA promoter. Interacts both with the preinitiation and elongation complexes.

Its function is as follows. Transcription factor that plays a role in the activation of archaeal genes transcribed by RNA polymerase. Facilitates transcription initiation by enhancing TATA-box recognition by TATA-box-binding protein (Tbp), and transcription factor B (Tfb) and RNA polymerase recruitment. Not absolutely required for transcription in vitro, but particularly important in cases where Tbp or Tfb function is not optimal. It dynamically alters the nucleic acid-binding properties of RNA polymerases by stabilizing the initiation complex and destabilizing elongation complexes. Seems to translocate with the RNA polymerase following initiation and acts by binding to the non template strand of the transcription bubble in elongation complexes. The chain is Transcription factor E from Pyrobaculum aerophilum (strain ATCC 51768 / DSM 7523 / JCM 9630 / CIP 104966 / NBRC 100827 / IM2).